The following is a 394-amino-acid chain: Elongation factor Tu (394 aa).

The 195-residue stretch at 10 to 204 folds into the tr-type G domain; that stretch reads KPHVNVGTIG…ALDSYIPEPE (195 aa). The tract at residues 19–26 is G1; it reads GHVDHGKT. 19 to 26 lines the GTP pocket; sequence GHVDHGKT. Residue threonine 26 coordinates Mg(2+). Residues 60 to 64 are G2; sequence GITIA. Positions 81 to 84 are G3; that stretch reads DCPG. GTP contacts are provided by residues 81-85 and 136-139; these read DCPGH and NKCD. Positions 136-139 are G4; it reads NKCD. The tract at residues 174-176 is G5; it reads SAL.

It belongs to the TRAFAC class translation factor GTPase superfamily. Classic translation factor GTPase family. EF-Tu/EF-1A subfamily. Monomer.

The protein localises to the cytoplasm. It carries out the reaction GTP + H2O = GDP + phosphate + H(+). In terms of biological role, GTP hydrolase that promotes the GTP-dependent binding of aminoacyl-tRNA to the A-site of ribosomes during protein biosynthesis. In Vibrio campbellii (strain ATCC BAA-1116), this protein is Elongation factor Tu.